A 426-amino-acid chain; its full sequence is Serine--tRNA ligase (426 aa).

Thr-235 to Glu-237 lines the L-serine pocket. ATP is bound by residues Arg-266 to Glu-268 and Val-282. Position 289 (Glu-289) interacts with L-serine. Residue Glu-353–Ser-356 participates in ATP binding. Ser-389 contacts L-serine.

The protein belongs to the class-II aminoacyl-tRNA synthetase family. Type-1 seryl-tRNA synthetase subfamily. In terms of assembly, homodimer. The tRNA molecule binds across the dimer.

It is found in the cytoplasm. The enzyme catalyses tRNA(Ser) + L-serine + ATP = L-seryl-tRNA(Ser) + AMP + diphosphate + H(+). The catalysed reaction is tRNA(Sec) + L-serine + ATP = L-seryl-tRNA(Sec) + AMP + diphosphate + H(+). Its pathway is aminoacyl-tRNA biosynthesis; selenocysteinyl-tRNA(Sec) biosynthesis; L-seryl-tRNA(Sec) from L-serine and tRNA(Sec): step 1/1. In terms of biological role, catalyzes the attachment of serine to tRNA(Ser). Is also able to aminoacylate tRNA(Sec) with serine, to form the misacylated tRNA L-seryl-tRNA(Sec), which will be further converted into selenocysteinyl-tRNA(Sec). The polypeptide is Serine--tRNA ligase (Chlorobium chlorochromatii (strain CaD3)).